The sequence spans 833 residues: MutS protein homolog 5 (833 aa).

The segment at 1 to 45 (MAFRATPGRTPPGPGPRSGIPSASFPSPQPPMAGPGGIEEEDEEE) is disordered. Residue 591 to 598 (GPNSSGKS) participates in ATP binding.

The protein belongs to the DNA mismatch repair MutS family. As to quaternary structure, heterooligomer of MSH4 and MSH5. Interacts with HJURP. Interacts with REDIC1.

Involved in DNA mismatch repair and meiotic recombination processes. Facilitates crossovers between homologs during meiosis. The chain is MutS protein homolog 5 (Msh5) from Mus musculus (Mouse).